A 139-amino-acid chain; its full sequence is Large ribosomal subunit protein uL16 (139 aa).

A compositionally biased stretch (basic residues) spans 1-20 (MLIPRRVKHRKQHHPKRRGM). Residues 1 to 22 (MLIPRRVKHRKQHHPKRRGMAK) are disordered.

It belongs to the universal ribosomal protein uL16 family. Part of the 50S ribosomal subunit.

In terms of biological role, binds 23S rRNA and is also seen to make contacts with the A and possibly P site tRNAs. This Streptomyces coelicolor (strain ATCC BAA-471 / A3(2) / M145) protein is Large ribosomal subunit protein uL16.